The sequence spans 604 residues: MNNMKKIIIISIIIIIIIVLLFYINKSLTNSTKQSLNKIHTDNYDRHVYSNGKYAHFSKITRDDSQLYPSLKYCTKYEFELRSGDMLYIPKGWWHWIESIGRTISVNFWWDNGQIRIPNNKLNLIQPKTRGVNCNKSMVFETNYINNNNSLNNITNPIIIRNGYSSLKEKFTDKFLLDKIPKVEVWDGVNNTVENTTLKKFINSKDKHKYIITLDQFSINNHIKNILKNDVIVPTILSYTNCEYNFWFSYNYMDTGLHYDDYDGLLCVIDGIKKIKLYAPCDSPYLHSFPLFPKWSTILPPTNISYNLYKNIEWMTKPSNNSLPSSMLLFKTVHNKYLITIIDKLYNIYGSNNIIYGIKNSDGKLRWEFYFYRTDTVPGQINILDKNNPESWIPKFSKILQLHMNNVSINKPINKNNLLVSCFDYQPELFPKTDIDLYYSIPNNLKNLSELNSSDLYKIIQTTPETEISSNYPLFIAIYNHNTNLHKGNQIIDFKSSVIKNLDEYLFIFNIPQCKNWIGKTLNYYGSNKNIVCSIAVKKDTVGLFWFGLTTQEFIKFLNENQWNSEYVNWLSTNSKLFDHLSHEICIHYDYNGNPKRSAFYGII.

In terms of domain architecture, JmjC spans 1–127; the sequence is MNNMKKIIII…PNNKLNLIQP (127 aa). A helical transmembrane segment spans residues 4–24; sequence MKKIIIISIIIIIIIVLLFYI.

The protein localises to the membrane. The polypeptide is Putative JmjC domain-containing protein L887 (Acanthamoeba polyphaga (Amoeba)).